The chain runs to 231 residues: 2-C-methyl-D-erythritol 4-phosphate cytidylyltransferase (231 aa).

This sequence belongs to the IspD/TarI cytidylyltransferase family. IspD subfamily.

The catalysed reaction is 2-C-methyl-D-erythritol 4-phosphate + CTP + H(+) = 4-CDP-2-C-methyl-D-erythritol + diphosphate. Its pathway is isoprenoid biosynthesis; isopentenyl diphosphate biosynthesis via DXP pathway; isopentenyl diphosphate from 1-deoxy-D-xylulose 5-phosphate: step 2/6. In terms of biological role, catalyzes the formation of 4-diphosphocytidyl-2-C-methyl-D-erythritol from CTP and 2-C-methyl-D-erythritol 4-phosphate (MEP). This chain is 2-C-methyl-D-erythritol 4-phosphate cytidylyltransferase, found in Rubrobacter xylanophilus (strain DSM 9941 / JCM 11954 / NBRC 16129 / PRD-1).